A 95-amino-acid polypeptide reads, in one-letter code: Co-chaperonin GroES (95 aa).

The protein belongs to the GroES chaperonin family. As to quaternary structure, heptamer of 7 subunits arranged in a ring. Interacts with the chaperonin GroEL.

The protein localises to the cytoplasm. Its function is as follows. Together with the chaperonin GroEL, plays an essential role in assisting protein folding. The GroEL-GroES system forms a nano-cage that allows encapsulation of the non-native substrate proteins and provides a physical environment optimized to promote and accelerate protein folding. GroES binds to the apical surface of the GroEL ring, thereby capping the opening of the GroEL channel. In Pelodictyon phaeoclathratiforme (strain DSM 5477 / BU-1), this protein is Co-chaperonin GroES.